The primary structure comprises 426 residues: Serine--tRNA ligase (426 aa).

231 to 233 (TSE) provides a ligand contact to L-serine. Residue 262–264 (RSE) participates in ATP binding. Glu-285 lines the L-serine pocket. 349 to 352 (EISS) contacts ATP. Residue Ser-385 coordinates L-serine.

It belongs to the class-II aminoacyl-tRNA synthetase family. Type-1 seryl-tRNA synthetase subfamily. As to quaternary structure, homodimer. The tRNA molecule binds across the dimer.

The protein resides in the cytoplasm. The enzyme catalyses tRNA(Ser) + L-serine + ATP = L-seryl-tRNA(Ser) + AMP + diphosphate + H(+). The catalysed reaction is tRNA(Sec) + L-serine + ATP = L-seryl-tRNA(Sec) + AMP + diphosphate + H(+). The protein operates within aminoacyl-tRNA biosynthesis; selenocysteinyl-tRNA(Sec) biosynthesis; L-seryl-tRNA(Sec) from L-serine and tRNA(Sec): step 1/1. Its function is as follows. Catalyzes the attachment of serine to tRNA(Ser). Is also able to aminoacylate tRNA(Sec) with serine, to form the misacylated tRNA L-seryl-tRNA(Sec), which will be further converted into selenocysteinyl-tRNA(Sec). This is Serine--tRNA ligase from Legionella pneumophila subsp. pneumophila (strain Philadelphia 1 / ATCC 33152 / DSM 7513).